Here is a 294-residue protein sequence, read N- to C-terminus: Beta-lactamase (294 aa).

A signal peptide spans 1–27; that stretch reads MFKKRGRQTVLIAAVLAFFTASSPLLA. Catalysis depends on Ser76, which acts as the Acyl-ester intermediate. Glu174 (proton acceptor) is an active-site residue. 240 to 242 contributes to the substrate binding site; the sequence is KTG.

This sequence belongs to the class-A beta-lactamase family.

It carries out the reaction a beta-lactam + H2O = a substituted beta-amino acid. The sequence is that of Beta-lactamase from Citrobacter koseri (Citrobacter diversus).